A 151-amino-acid chain; its full sequence is Large ribosomal subunit protein uL22c (151 aa).

Belongs to the universal ribosomal protein uL22 family. In terms of assembly, part of the 50S ribosomal subunit.

The protein localises to the plastid. The protein resides in the chloroplast. In terms of biological role, this protein binds specifically to 23S rRNA. Its function is as follows. The globular domain of the protein is located near the polypeptide exit tunnel on the outside of the subunit, while an extended beta-hairpin is found that lines the wall of the exit tunnel in the center of the 70S ribosome. The polypeptide is Large ribosomal subunit protein uL22c (rpl22) (Gossypium barbadense (Sea Island cotton)).